Reading from the N-terminus, the 38-residue chain is MKVRASVKKLCRNCKIVKREGVIRVICSAEPKHKQRQG.

It belongs to the bacterial ribosomal protein bL36 family.

The chain is Large ribosomal subunit protein bL36A from Enterobacter sp. (strain 638).